A 354-amino-acid polypeptide reads, in one-letter code: Ferrochelatase (354 aa).

Fe cation is bound by residues His-214 and Glu-295.

The protein belongs to the ferrochelatase family.

The protein localises to the cytoplasm. It catalyses the reaction heme b + 2 H(+) = protoporphyrin IX + Fe(2+). Its pathway is porphyrin-containing compound metabolism; protoheme biosynthesis; protoheme from protoporphyrin-IX: step 1/1. In terms of biological role, catalyzes the ferrous insertion into protoporphyrin IX. The polypeptide is Ferrochelatase (Burkholderia cenocepacia (strain HI2424)).